Reading from the N-terminus, the 119-residue chain is Beta-2-microglobulin (119 aa).

Residues 1–20 form the signal peptide; sequence MSPSVALAVLALLSLSGLEA. The Ig-like C1-type domain occupies 25-114; the sequence is PKIQVYSRHP…VTLSGPRTVK (90 aa). Residues cysteine 45 and cysteine 100 are joined by a disulfide bond.

It belongs to the beta-2-microglobulin family. As to quaternary structure, heterodimer of an alpha chain and a beta chain. Beta-2-microglobulin is the beta-chain of major histocompatibility complex class I molecules.

It is found in the secreted. Component of the class I major histocompatibility complex (MHC). Involved in the presentation of peptide antigens to the immune system. This chain is Beta-2-microglobulin (B2M), found in Macaca fascicularis (Crab-eating macaque).